A 326-amino-acid polypeptide reads, in one-letter code: Vitamin B12 import system permease protein BtuC (326 aa).

The next 9 helical transmembrane spans lie at Trp-15–Glu-35, Leu-61–Phe-81, Pro-88–Gly-108, Leu-112–Leu-132, Leu-146–Phe-166, Gly-184–Ile-204, Gly-240–Ile-260, Val-274–Ala-294, and Glu-302–Leu-322.

The protein belongs to the binding-protein-dependent transport system permease family. FecCD subfamily. In terms of assembly, the complex is composed of two ATP-binding proteins (BtuD), two transmembrane proteins (BtuC) and a solute-binding protein (BtuF).

The protein resides in the cell inner membrane. Functionally, part of the ABC transporter complex BtuCDF involved in vitamin B12 import. Involved in the translocation of the substrate across the membrane. The protein is Vitamin B12 import system permease protein BtuC of Salmonella enteritidis PT4 (strain P125109).